Reading from the N-terminus, the 436-residue chain is MAVWALGINHHTAPLDLRGRFAFALDQIAPTLHGLRDSLSSASGRHPGVETAIISTCNRTEIYCAAEAPALDHTLDWLAHSGGVSPALLRSHSYSLENGLVARHAFRVASGLDSMVLGEAQILGQMKDAVRAAEGAGALGTTLNQLFQRSFAVAKEVRTSTDIGAHSISMAAAAVRLAGQLFEDLSQIRVLFVGAGEMIELCTTHFAAKNPKQISIANRTLERGEKLAARFGGDVMRLADLPDHLHEYDAVISCTASSLPIIGLGAVERSLKKRRHRPMFMVDLAVPRDIEPEVQQLQDAYLYTVDDLASVVQTAQAHRQAAVAQAEAIIDAGVQSFVHWMELRSPATQNGGVVPLIQQLNSQADEWRALEIARAKKRLAKGEDIETVLEALSRGLTQKMLHGTMAELRAGDAEARAQTAQAVSRLFLRSHSKNGL.

Residues 56–59, serine 114, 119–121, and glutamine 125 each bind substrate; these read TCNR and EAQ. Catalysis depends on cysteine 57, which acts as the Nucleophile. NADP(+) is bound at residue 194–199; the sequence is GAGEMI.

This sequence belongs to the glutamyl-tRNA reductase family. As to quaternary structure, homodimer.

The catalysed reaction is (S)-4-amino-5-oxopentanoate + tRNA(Glu) + NADP(+) = L-glutamyl-tRNA(Glu) + NADPH + H(+). The protein operates within porphyrin-containing compound metabolism; protoporphyrin-IX biosynthesis; 5-aminolevulinate from L-glutamyl-tRNA(Glu): step 1/2. Functionally, catalyzes the NADPH-dependent reduction of glutamyl-tRNA(Glu) to glutamate 1-semialdehyde (GSA). The protein is Glutamyl-tRNA reductase of Acidovorax sp. (strain JS42).